Reading from the N-terminus, the 615-residue chain is Alpha-fetoprotein (615 aa).

An N-terminal signal peptide occupies residues methionine 1 to glycine 15. The short motif at arginine 14–aspartate 16 is the Cell attachment site element. Albumin domains lie at tryptophan 27–alanine 218, lysine 223–lysine 415, and histidine 416–threonine 609. Cystine bridges form between cysteine 109/cysteine 121 and cysteine 120/cysteine 131. Residues asparagine 137 and asparagine 157 are each glycosylated (N-linked (GlcNAc...) asparagine). Disulfide bonds link cysteine 155/cysteine 200, cysteine 199/cysteine 213, cysteine 236/cysteine 282, cysteine 281/cysteine 289, cysteine 301/cysteine 315, cysteine 314/cysteine 325, cysteine 396/cysteine 405, cysteine 428/cysteine 458, and cysteine 457/cysteine 468. The short motif at arginine 283–aspartate 285 is the Cell attachment site element. An N-linked (GlcNAc...) asparagine glycan is attached at asparagine 472. Cystine bridges form between cysteine 485–cysteine 501, cysteine 500–cysteine 511, cysteine 538–cysteine 593, and cysteine 592–cysteine 601.

It belongs to the ALB/AFP/VDB family. In terms of assembly, dimeric and trimeric forms have been found in addition to the monomeric form. In terms of processing, sulfated.

The protein localises to the secreted. Binds copper, nickel, and fatty acids as well as, and bilirubin less well than, serum albumin. In Gallus gallus (Chicken), this protein is Alpha-fetoprotein (AFP).